A 706-amino-acid chain; its full sequence is Elongation factor G (706 aa).

Residues 8-290 (NRYRNIGICA…AVIDYLPAPT (283 aa)) enclose the tr-type G domain. GTP is bound by residues 17-24 (AHVDAGKT), 88-92 (DTPGH), and 142-145 (NKMD).

Belongs to the TRAFAC class translation factor GTPase superfamily. Classic translation factor GTPase family. EF-G/EF-2 subfamily.

It is found in the cytoplasm. In terms of biological role, catalyzes the GTP-dependent ribosomal translocation step during translation elongation. During this step, the ribosome changes from the pre-translocational (PRE) to the post-translocational (POST) state as the newly formed A-site-bound peptidyl-tRNA and P-site-bound deacylated tRNA move to the P and E sites, respectively. Catalyzes the coordinated movement of the two tRNA molecules, the mRNA and conformational changes in the ribosome. This chain is Elongation factor G, found in Stutzerimonas stutzeri (strain A1501) (Pseudomonas stutzeri).